The sequence spans 392 residues: Galactokinase (392 aa).

The alpha-D-galactose site is built by R37, E43, H44, and D46. ATP contacts are provided by G136, G138, S140, and S141. D186 is a binding site for alpha-D-galactose. Catalysis depends on D186, which acts as the Proton acceptor. At S230 the chain carries Phosphoserine. Alpha-D-galactose is bound at residue Y236.

It belongs to the GHMP kinase family. GalK subfamily. As to quaternary structure, homodimer.

The enzyme catalyses alpha-D-galactose + ATP = alpha-D-galactose 1-phosphate + ADP + H(+). It functions in the pathway carbohydrate metabolism; galactose metabolism. Functionally, catalyzes the transfer of a phosphate from ATP to alpha-D-galactose and participates in the first committed step in the catabolism of galactose. The protein is Galactokinase of Homo sapiens (Human).